The sequence spans 529 residues: Bifunctional purine biosynthesis protein PurH (529 aa).

The region spanning Met-1 to Val-148 is the MGS-like domain.

The protein belongs to the PurH family.

It catalyses the reaction (6R)-10-formyltetrahydrofolate + 5-amino-1-(5-phospho-beta-D-ribosyl)imidazole-4-carboxamide = 5-formamido-1-(5-phospho-D-ribosyl)imidazole-4-carboxamide + (6S)-5,6,7,8-tetrahydrofolate. It carries out the reaction IMP + H2O = 5-formamido-1-(5-phospho-D-ribosyl)imidazole-4-carboxamide. It participates in purine metabolism; IMP biosynthesis via de novo pathway; 5-formamido-1-(5-phospho-D-ribosyl)imidazole-4-carboxamide from 5-amino-1-(5-phospho-D-ribosyl)imidazole-4-carboxamide (10-formyl THF route): step 1/1. The protein operates within purine metabolism; IMP biosynthesis via de novo pathway; IMP from 5-formamido-1-(5-phospho-D-ribosyl)imidazole-4-carboxamide: step 1/1. In Klebsiella pneumoniae (strain 342), this protein is Bifunctional purine biosynthesis protein PurH.